The sequence spans 406 residues: Transposase for insertion sequence element IS1001 (406 aa).

The protein belongs to the transposase 12 family.

Its function is as follows. Involved in the transposition of the insertion sequence. This is Transposase for insertion sequence element IS1001 (tnpA) from Bordetella parapertussis.